Consider the following 837-residue polypeptide: MEPAPSEVRLAVREAIHALSSSEDGGHIFCTLESLKRYLGEMEPPALPREKEEFASAHFSPVLRCLASRLSPAWLELLPHGRLEELWASFFLEGPADQAFLVLMETIEGAAGPSFRLMKMARLLARFLREGRLAVLMEAQCRQQTQPGFILLRETLLGKVVALPDHLGNRLQQENLAEFFPQNYFRLLGEEVVRVLQAVVDSLQGGLDSSVSFVSQVLGKACVHGRQQEILGVLVPRLAALTQGSYLHQRVCWRLVEQVPDRAMEAVLTGLVEAALGPEVLSRLLGNLVVKNKKAQFVMTQKLLFLQSRLTTPMLQSLLGHLAMDSQRRPLLLQVLKELLETWGSSSAIRHTPLPQQRHVSKAVLICLAQLGEPELRDSRDELLASMMAGVKCRLDSSLPPVRRLGMIVAEVVSARIHPEGPPLKFQYEEDELSLELLALASPQPAGDGASEAGTSLVPATAEPPAETPAEIVDGGVPQAQLAGSDSDLDSDDEFVPYDMSGDRELKSSKAPAYVRDCVEALTTSEDIERWEAALRALEGLVYRSPTATREVSVELAKVLLHLEEKTCVVGFAGLRQRALVAVTVTDPAPVADYLTSQFYALNYSLRQRMDILDVLTLAAQELSRPGCLGRTPQPGSPSPNTPCLPEAAVSQPGSAVASDWRVVVEERIRSKTQRLSKGGPRQGPAGSPSRFNSVAGHFFFPLLQRFDRPLVTFDLLGEDQLVLGRLAHTLGALMCLAVNTTVAVAMGKALLEFVWALRFHIDAYVRQGLLSAVSSVLLSLPAARLLEDLMDELLEARSWLADVAEKDPDEDCRTLALRALLLLQRLKNRLLPPASP.

Met1 carries the N-acetylmethionine modification. Pro374, Pro419, and Pro422 each carry hydroxyproline. A disordered region spans residues 444–472 (QPAGDGASEAGTSLVPATAEPPAETPAEI). Residue Ser456 is modified to Phosphoserine. Over residues 459–471 (PATAEPPAETPAE) the composition is skewed to low complexity. Ser485 carries the phosphoserine; by CK2 modification. Residues Ser487 and Ser491 each carry the phosphoserine modification. Residues 627 to 651 (GCLGRTPQPGSPSPNTPCLPEAAVS) form a disordered region. Phosphoserine occurs at positions 688 and 836.

Belongs to the TEL2 family. Component of the TTT complex composed of TELO2, TTI1 and TTI2. Interacts with ATM, ATR, MTOR, PRKDC, RUVBL2, TTI1, TTI2, SMG1 and TRRAP. Component of the mTORC1 and mTORC2 complexes. Interacts (phosphorylated form) with PIH1D1 which mediates interaction of TELO2 with the R2TP complex composed of RUVBL1, RUVBL2, PIH1D1, and RPAP3. In terms of processing, hydroxylation by PHD3 is required for a proper interaction with ATR, and activation of the ATR/CHK1/p53 pathway following DNA damage. Phosphorylated at Ser-485 by CK2 following growth factor deprivation, leading to its subsequent ubiquitination by the SCF(FBXO9) complex. Phosphorylation by CK2 only takes place when TELO2 is bound to mTORC1, not mTORC2; leading to selective ubiquitination of mTORC1-associated protein. Post-translationally, ubiquitinated by the SCF(FBXO9) complex following phosphorylation by CK2 in response to growth factor deprivation, leading to its degradation by the proteasome. Only mTORC1-associated protein is ubiquitinated and degraded, leading to selective inactivation of mTORC1 to restrain cell growth and protein translation, while mTORC2 is activated due to the relief of feedback inhibition by mTORC1.

It is found in the cytoplasm. Its subcellular location is the membrane. It localises to the nucleus. The protein localises to the chromosome. The protein resides in the telomere. Regulator of the DNA damage response (DDR). Part of the TTT complex that is required to stabilize protein levels of the phosphatidylinositol 3-kinase-related protein kinase (PIKK) family proteins. The TTT complex is involved in the cellular resistance to DNA damage stresses, like ionizing radiation (IR), ultraviolet (UV) and mitomycin C (MMC). Together with the TTT complex and HSP90 may participate in the proper folding of newly synthesized PIKKs. Promotes assembly, stabilizes and maintains the activity of mTORC1 and mTORC2 complexes, which regulate cell growth and survival in response to nutrient and hormonal signals. May be involved in telomere length regulation. The protein is Telomere length regulation protein TEL2 homolog (TELO2) of Homo sapiens (Human).